Here is a 288-residue protein sequence, read N- to C-terminus: Energy-coupling factor transporter ATP-binding protein EcfA2 (288 aa).

Residues 3–246 (ITFDHVSFTY…PAWLKANQLG (244 aa)) enclose the ABC transporter domain. 40 to 47 (GHTGSGKS) serves as a coordination point for ATP. The active-site Proton acceptor is the E171.

Belongs to the ABC transporter superfamily. Energy-coupling factor EcfA family. In terms of assembly, forms a stable energy-coupling factor (ECF) transporter complex probably composed of 2 membrane-embedded substrate-binding proteins (S component), 2 ATP-binding proteins (A component) and 2 transmembrane proteins (T component). This complex interacts with a number of substrate-specific components, including FolT and ThiT for 5-formyltetrahydrofolate and thiamine respectively.

The protein localises to the cell membrane. In terms of biological role, ATP-binding (A) component of a common energy-coupling factor (ECF) ABC-transporter complex. Unlike classic ABC transporters this ECF transporter provides the energy necessary to transport a number of different substrates including 5-formyltetrahydrofolate and thiamine. Expression of the complex plus FolT or ThiT in Lactococcus lactis subsp. cremoris (strain NZ9000) allows 5-formyltetrahydrofolate or thiamine uptake respectively; 5-formyltetrahydrofolate or thiamine are not taken up in the absence of FolT/ThiT or the EcfA1A2T complex. Deenergized L.lactis subsp. cremoris (treated with 2-deoxyglucose) do not take up substrate. This is Energy-coupling factor transporter ATP-binding protein EcfA2 from Lacticaseibacillus paracasei (strain ATCC 334 / BCRC 17002 / CCUG 31169 / CIP 107868 / KCTC 3260 / NRRL B-441) (Lactobacillus paracasei).